The following is a 52-amino-acid chain: IYVRPTNDELNYCGDFRELGQPDKKCRCDGKPCTVGRCKFARGDNDDKCISA.

The short motif at 42–44 (RGD) is the Cell attachment site element.

This sequence belongs to the ornatin family.

Its subcellular location is the secreted. In terms of biological role, potent inhibitor of fibrinogen interaction with platelet receptors expressed on glycoprotein IIb-IIIa complex. May prevent blood from clotting during either feeding and/or storage of ingested blood. The protein is Ornatin-B of Placobdella ornata (Turtle leech).